We begin with the raw amino-acid sequence, 528 residues long: QDQVIKFTTEGATSQSYKQFIEALRQRLTGGLIHDIPVLPDPTTVEERNRYITVELSNSERESIEVGIDVTNAYVVAYRAGSQSYFLRDAPASASTYLFPGTQRYSLRFDGSYGDLERWAHQTREEISLGLQALTHAISFLRSGASNDEEKARTLIVIIQMASEAARYRCISNRVGVSIRTGTAFQPDPAMLSLENNWDNLSGGVQQSVQDAFPNNVILSSINRQPVVVDSLSHPTVAVLALMLFVCNPPNANQSPLLIRSIVEESKICSSRYEPTVRIGGRDGMCVDVYDDGYHNGNRIIAWKCKDRLEENQLWTLKSDLTIRSNGKCLTTEGYAPGNYVMIYDCTSAVAEATYWEIWDNGTIINPKSALVLSAESSSMGGTLTVQTNEYLMRQGWRTGNNTSPFVTSISGYSDLCMQAQGSNVWLADCDNNKKEQQWALYTDGSIRSVQNTNNCLTSKDHKQGSPIVLMACSNGWASQRWLFKNDGSIYSLYDDMVMDVKGSDPSLKQIILWPYTGKPNQIWLTLF.

Gln1 bears the Pyrrolidone carboxylic acid mark. Residue Glu164 is part of the active site. Asn200 carries N-linked (GlcNAc...) asparagine glycosylation. 3 disulfide bridges follow: Cys247–Cys269, Cys286–Cys305, and Cys329–Cys346. The 128-residue stretch at 273–400 (YEPTVRIGGR…YLMRQGWRTG (128 aa)) folds into the Ricin B-type lectin 1 domain. Residues 283-325 (DGMCVDVYDDGYHNGNRIIAWKCKDRLEENQLWTLKSDLTIRS) form a 1-alpha repeat. The stretch at 326-366 (NGKCLTTEGYAPGNYVMIYDCTSAVAEATYWEIWDNGTIIN) is one 1-beta repeat. 2 N-linked (GlcNAc...) asparagine glycosylation sites follow: Asn361 and Asn401. One copy of the 1-gamma repeat lies at 369 to 401 (SALVLSAESSSMGGTLTVQTNEYLMRQGWRTGN). The Ricin B-type lectin 2 domain maps to 403–527 (TSPFVTSISG…GKPNQIWLTL (125 aa)). A 2-alpha repeat occupies 414–449 (SDLCMQAQGSNVWLADCDNNKKEQQWALYTDGSIRS). 2 cysteine pairs are disulfide-bonded: Cys417–Cys430 and Cys456–Cys473. A 2-beta repeat occupies 453 to 492 (TNNCLTSKDHKQGSPIVLMACSNGWASQRWLFKNDGSIYS). One copy of the 2-gamma repeat lies at 495–528 (DDMVMDVKGSDPSLKQIILWPYTGKPNQIWLTLF).

The protein in the N-terminal section; belongs to the ribosome-inactivating protein family. Type 2 RIP subfamily. Disulfide-linked dimer of A and B chains.

It catalyses the reaction Endohydrolysis of the N-glycosidic bond at one specific adenosine on the 28S rRNA.. The A chain is responsible for inhibiting protein synthesis through the catalytic inactivation of 60S ribosomal subunits by removing adenine from position 4,324 of 28S rRNA. In terms of biological role, the B chain is a galactose-specific lectin that facilitates the binding of abrin to the cell membrane that precedes endocytosis. This chain is Abrin-d, found in Abrus precatorius (Indian licorice).